The following is a 557-amino-acid chain: TNF receptor-associated factor 5 (557 aa).

The RING-type zinc-finger motif lies at 45–85 (CAFCHSVLHNPHQTGCGHRFCQHCILSLRELNTVPICPVDK). 2 consecutive TRAF-type zinc fingers follow at residues 127 to 181 (DHLQ…INLQ) and 182 to 239 (NHEE…RNLQ). Residues 237 to 342 (NLQQHEHSAL…VNQQQNKFDL (106 aa)) adopt a coiled-coil conformation. Residue K318 forms a Glycyl lysine isopeptide (Lys-Gly) (interchain with G-Cter in ubiquitin) linkage. The tract at residues 345 to 557 (LMEAVDTVKQ…AVDLTDLEDL (213 aa)) is interaction with EIF2AK2/PKR. Positions 403 to 549 (NGKLIWKVTD…DDTLFLKVAV (147 aa)) constitute an MATH domain.

It belongs to the TNF receptor-associated factor family. A subfamily. Homotrimer. Heteromer with TRAF3. Associates with TNFRSF5/CD40 through interaction with TRAF3. Associates with LTBR/TNFRSF3, TNFRSF4, TNFRSF8/CD30, TNFRSF11A/RANK, TNFRSF13B/TACI, TNFRSF14, TNFRSF17, TNFRSF19/TROY, RIPK2, MAP3K14, MAP3K5, and TRAF and TNF receptor associated protein TDP2. Interacts (via C-terminus) with EIF2AK2/PKR (via the kinase catalytic domain). Post-translationally, ubiquitinated at Lys-318 by the SCF(FBXL2) complex, leading to its degradation by the proteasome. Expressed in spleen, thymus, prostate, testis, ovary, small intestine, colon, and peripheral blood.

The protein localises to the cytoplasm. Its subcellular location is the cytosol. In terms of biological role, adapter protein and signal transducer that links members of the tumor necrosis factor receptor family to different signaling pathways by association with the receptor cytoplasmic domain and kinases. Mediates activation of NF-kappa-B and probably JNK. Seems to be involved in apoptosis. Plays a role in mediating activation of NF-kappa-B by EIF2AK2/PKR. In Homo sapiens (Human), this protein is TNF receptor-associated factor 5 (TRAF5).